A 240-amino-acid chain; its full sequence is Ribonuclease 3 (240 aa).

The 131-residue stretch at 4-134 folds into the RNase III domain; the sequence is SRQPLLDALG…LLGAIYLQHG (131 aa). E44 serves as a coordination point for Mg(2+). D48 is an active-site residue. D120 and E123 together coordinate Mg(2+). E123 is a catalytic residue. A DRBM domain is found at 161–229; the sequence is DWKTSLQELT…AAAAWKALEV (69 aa).

This sequence belongs to the ribonuclease III family. Homodimer. Mg(2+) is required as a cofactor.

It is found in the cytoplasm. The enzyme catalyses Endonucleolytic cleavage to 5'-phosphomonoester.. In terms of biological role, digests double-stranded RNA. Involved in the processing of primary rRNA transcript to yield the immediate precursors to the large and small rRNAs (23S and 16S). Processes some mRNAs, and tRNAs when they are encoded in the rRNA operon. Processes pre-crRNA and tracrRNA of type II CRISPR loci if present in the organism. The sequence is that of Ribonuclease 3 from Mycobacterium bovis (strain ATCC BAA-935 / AF2122/97).